The primary structure comprises 240 residues: Tubulin alpha chain (240 aa).

GTP is bound at residue N17. Residue E43 is part of the active site.

This sequence belongs to the tubulin family. In terms of assembly, dimer of alpha and beta chains. A typical microtubule is a hollow water-filled tube with an outer diameter of 25 nm and an inner diameter of 15 nM. Alpha-beta heterodimers associate head-to-tail to form protofilaments running lengthwise along the microtubule wall with the beta-tubulin subunit facing the microtubule plus end conferring a structural polarity. Microtubules usually have 13 protofilaments but different protofilament numbers can be found in some organisms and specialized cells. It depends on Mg(2+) as a cofactor. In terms of processing, undergoes a tyrosination/detyrosination cycle, the cyclic removal and re-addition of a C-terminal tyrosine residue by the enzymes tubulin tyrosine carboxypeptidase (TTCP) and tubulin tyrosine ligase (TTL), respectively.

Its subcellular location is the cytoplasm. The protein resides in the cytoskeleton. It catalyses the reaction GTP + H2O = GDP + phosphate + H(+). Tubulin is the major constituent of microtubules, a cylinder consisting of laterally associated linear protofilaments composed of alpha- and beta-tubulin heterodimers. Microtubules grow by the addition of GTP-tubulin dimers to the microtubule end, where a stabilizing cap forms. Below the cap, tubulin dimers are in GDP-bound state, owing to GTPase activity of alpha-tubulin. In Octopus vulgaris (Common octopus), this protein is Tubulin alpha chain.